A 376-amino-acid chain; its full sequence is Actin (376 aa).

This sequence belongs to the actin family.

It localises to the cytoplasm. The protein resides in the cytoskeleton. It catalyses the reaction ATP + H2O = ADP + phosphate + H(+). Actins are highly conserved proteins that are involved in various types of cell motility and are ubiquitously expressed in all eukaryotic cells. In Trypanosoma cruzi, this protein is Actin.